The primary structure comprises 197 residues: Probable low-affinity putrescine importer PlaP (197 aa).

5 consecutive transmembrane segments (helical) span residues 33-53 (GVLIFSSVTVLASGTAAHAGV), 85-105 (VLLVXAIALLAIKLDLVTATA), 107-127 (INLGALVAFTFVNLSVISQFW), 140-160 (FNYLILPVCGALTVGALWINL), and 163-183 (SSMVLGLIWGGIGLVYXACVT).

It belongs to the amino acid-polyamine-organocation (APC) superfamily.

The protein localises to the cell inner membrane. It catalyses the reaction putrescine(in) + H(+)(in) = putrescine(out) + H(+)(out). Putrescine importer. In Klebsiella pneumoniae, this protein is Probable low-affinity putrescine importer PlaP (plaP).